The following is a 250-amino-acid chain: 2,3-bisphosphoglycerate-dependent phosphoglycerate mutase (250 aa).

Substrate contacts are provided by residues 10–17, 23–24, Arg62, 89–92, Lys100, 116–117, and 185–186; these read RHGESVWN, TG, ERHY, RR, and GN. His11 serves as the catalytic Tele-phosphohistidine intermediate. Residue Glu89 is the Proton donor/acceptor of the active site.

Belongs to the phosphoglycerate mutase family. BPG-dependent PGAM subfamily. As to quaternary structure, homodimer.

The catalysed reaction is (2R)-2-phosphoglycerate = (2R)-3-phosphoglycerate. It functions in the pathway carbohydrate degradation; glycolysis; pyruvate from D-glyceraldehyde 3-phosphate: step 3/5. Catalyzes the interconversion of 2-phosphoglycerate and 3-phosphoglycerate. In Proteus mirabilis (strain HI4320), this protein is 2,3-bisphosphoglycerate-dependent phosphoglycerate mutase.